The chain runs to 130 residues: Cholecystokinin (130 aa).

Residues 1–20 (MYSGICICVFLAVLSASSFG) form the signal peptide. Positions 21 to 48 (QQTAGSHNGNPLAAELEQSLTEHHRHVR) are excised as a propeptide. The tract at residues 40-59 (LTEHHRHVRAPSSAGPLKPV) is disordered. A Sulfotyrosine modification is found at Tyr112. Residue Phe118 is modified to Phenylalanine amide. A propeptide spanning residues 122–130 (SAEEYEYSS) is cleaved from the precursor. 2 positions are modified to sulfotyrosine: Tyr126 and Tyr128.

The protein belongs to the gastrin/cholecystokinin family. The precursor is cleaved by proteases to produce a number of active cholecystokinins. As to expression, highly concentrated in the duodenum. Also localized in more distal parts of the small intestine.

Its subcellular location is the secreted. Its function is as follows. This peptide hormone induces gall bladder contraction and the release of pancreatic enzymes in the gut. Its function in the brain is not clear. This chain is Cholecystokinin (CCK), found in Struthio camelus (Common ostrich).